A 144-amino-acid polypeptide reads, in one-letter code: D-aminoacyl-tRNA deacylase (144 aa).

The Gly-cisPro motif, important for rejection of L-amino acids signature appears at 136–137 (GP).

This sequence belongs to the DTD family. In terms of assembly, homodimer.

The protein resides in the cytoplasm. It carries out the reaction glycyl-tRNA(Ala) + H2O = tRNA(Ala) + glycine + H(+). The catalysed reaction is a D-aminoacyl-tRNA + H2O = a tRNA + a D-alpha-amino acid + H(+). An aminoacyl-tRNA editing enzyme that deacylates mischarged D-aminoacyl-tRNAs. Also deacylates mischarged glycyl-tRNA(Ala), protecting cells against glycine mischarging by AlaRS. Acts via tRNA-based rather than protein-based catalysis; rejects L-amino acids rather than detecting D-amino acids in the active site. By recycling D-aminoacyl-tRNA to D-amino acids and free tRNA molecules, this enzyme counteracts the toxicity associated with the formation of D-aminoacyl-tRNA entities in vivo and helps enforce protein L-homochirality. The sequence is that of D-aminoacyl-tRNA deacylase from Vibrio vulnificus (strain CMCP6).